The primary structure comprises 444 residues: Chromosomal replication initiator protein DnaA (444 aa).

Residues 1–73 (MDSSAQQLWH…AEVVQDIVGY (73 aa)) form a domain I, interacts with DnaA modulators region. The interval 73-104 (YPVEIQLTAQQGDLIAIFQPHTSLESELSPTN) is domain II. Positions 105–321 (QLNPKYNFSR…GALIRATTYI (217 aa)) are domain III, AAA+ region. Glycine 149, glycine 151, lysine 152, and threonine 153 together coordinate ATP. The segment at 322–444 (SISGLPMTVE…ERINSLSRNQ (123 aa)) is domain IV, binds dsDNA.

This sequence belongs to the DnaA family. Oligomerizes as a right-handed, spiral filament on DNA at oriC.

It localises to the cytoplasm. Its function is as follows. Plays an essential role in the initiation and regulation of chromosomal replication. ATP-DnaA binds to the origin of replication (oriC) to initiate formation of the DNA replication initiation complex once per cell cycle. Binds the DnaA box (a 9 base pair repeat at the origin) and separates the double-stranded (ds)DNA. Forms a right-handed helical filament on oriC DNA; dsDNA binds to the exterior of the filament while single-stranded (ss)DNA is stabiized in the filament's interior. The ATP-DnaA-oriC complex binds and stabilizes one strand of the AT-rich DNA unwinding element (DUE), permitting loading of DNA polymerase. After initiation quickly degrades to an ADP-DnaA complex that is not apt for DNA replication. Binds acidic phospholipids. In Microcystis aeruginosa (strain NIES-843 / IAM M-2473), this protein is Chromosomal replication initiator protein DnaA.